A 322-amino-acid polypeptide reads, in one-letter code: Beta-ketoacyl-[acyl-carrier-protein] synthase III (322 aa).

Residues Cys113 and His249 contribute to the active site. The segment at 250–254 (QANLR) is ACP-binding. Asn279 is an active-site residue.

Belongs to the thiolase-like superfamily. FabH family. In terms of assembly, homodimer.

Its subcellular location is the cytoplasm. It carries out the reaction malonyl-[ACP] + acetyl-CoA + H(+) = 3-oxobutanoyl-[ACP] + CO2 + CoA. It functions in the pathway lipid metabolism; fatty acid biosynthesis. In terms of biological role, catalyzes the condensation reaction of fatty acid synthesis by the addition to an acyl acceptor of two carbons from malonyl-ACP. Catalyzes the first condensation reaction which initiates fatty acid synthesis and may therefore play a role in governing the total rate of fatty acid production. Possesses both acetoacetyl-ACP synthase and acetyl transacylase activities. Its substrate specificity determines the biosynthesis of branched-chain and/or straight-chain of fatty acids. This chain is Beta-ketoacyl-[acyl-carrier-protein] synthase III, found in Granulibacter bethesdensis (strain ATCC BAA-1260 / CGDNIH1).